The following is a 254-amino-acid chain: Vitamin B12 import ATP-binding protein BtuD (254 aa).

In terms of domain architecture, ABC transporter spans 3–239; sequence INYISVGNRL…ENLQQVFETP (237 aa). Residue 29–36 participates in ATP binding; it reads GPNGSGKS.

Belongs to the ABC transporter superfamily. Vitamin B12 importer (TC 3.A.1.13.1) family. The complex is composed of two ATP-binding proteins (BtuD), two transmembrane proteins (BtuC) and a solute-binding protein (BtuF).

Its subcellular location is the cell inner membrane. It catalyses the reaction an R-cob(III)alamin(out) + ATP + H2O = an R-cob(III)alamin(in) + ADP + phosphate + H(+). Functionally, part of the ABC transporter complex BtuCDF involved in vitamin B12 import. Responsible for energy coupling to the transport system. The polypeptide is Vitamin B12 import ATP-binding protein BtuD (Vibrio vulnificus (strain CMCP6)).